Reading from the N-terminus, the 174-residue chain is MASKSLFLVALLVGSFAFTSFASVANRKLKSGLEDQKTFFHHPGGGLGGGGGIGGGSGLGGGGGFGGGGGLGGGAGGGGGLGGGAGGGAGGGFGGGAGSGGGLGGGGGAGGGFGGGAGGGSGGGFGGGAGAGGGLGGGGGAGGGGGFGGGGGSGIGGGFGGGAGAGGGFGGGHH.

The N-terminal stretch at 1-22 (MASKSLFLVALLVGSFAFTSFA) is a signal peptide.

In terms of tissue distribution, mostly expressed in immature seed pods, and, to a lower extent, in stems and leaves. Present in phloem and epiderm in leaves, stems, flowers and fruits.

Its subcellular location is the vacuole. Involved in organ growth by promoting cell elongation processes. This Arabidopsis thaliana (Mouse-ear cress) protein is Glycine-rich protein 5.